The primary structure comprises 939 residues: Valine--tRNA ligase (939 aa).

The short motif at 47–57 (PNVTGILHMGH) is the 'HIGH' region element. Positions 563-567 (KLSKS) match the 'KMSKS' region motif. Residue Lys-566 participates in ATP binding. Positions 873-939 (AEHLAKEHAR…QSILDKIASL (67 aa)) form a coiled coil.

Belongs to the class-I aminoacyl-tRNA synthetase family. ValS type 1 subfamily. Monomer.

The protein resides in the cytoplasm. The catalysed reaction is tRNA(Val) + L-valine + ATP = L-valyl-tRNA(Val) + AMP + diphosphate. Catalyzes the attachment of valine to tRNA(Val). As ValRS can inadvertently accommodate and process structurally similar amino acids such as threonine, to avoid such errors, it has a 'posttransfer' editing activity that hydrolyzes mischarged Thr-tRNA(Val) in a tRNA-dependent manner. This is Valine--tRNA ligase from Chlamydia muridarum (strain MoPn / Nigg).